A 345-amino-acid chain; its full sequence is Aminopeptidase YpdE (345 aa).

Positions 62 and 166 each coordinate a divalent metal cation. Glu198 functions as the Proton acceptor in the catalytic mechanism. 3 residues coordinate a divalent metal cation: Glu199, Asp221, and His308.

It belongs to the peptidase M42 family. Co(2+) is required as a cofactor. The cofactor is Ni(2+). It depends on Mn(2+) as a cofactor. Cu(2+) serves as cofactor.

Has a broad aminopeptidase activity on non-blocked peptides by progressively cleaving amino acids off the peptide substrate. Aminopeptidase activity stops at the residue before the first proline in the peptide. Cannot cleave when proline is the first N-terminal residue. The protein is Aminopeptidase YpdE (ypdE) of Escherichia coli (strain K12).